The sequence spans 159 residues: Keratin-associated protein 6-2 (159 aa).

The interval 11–147 (GYGCGYGSGY…SYYRSGCCGY (137 aa)) is 66 X 2 AA repeats of G-[YCGS].

This sequence belongs to the KRTAP type 6 family. In terms of assembly, interacts with hair keratins. In terms of tissue distribution, expressed in skin during two hair growth cycles. Expression restricted to the cortical cells of hair follicles, appearing first in the cortical cells processing the flat nuclei located a few cells above the dermal papilla.

Its function is as follows. In the hair cortex, hair keratin intermediate filaments are embedded in an interfilamentous matrix, consisting of hair keratin-associated proteins (KRTAP), which are essential for the formation of a rigid and resistant hair shaft through their extensive disulfide bond cross-linking with abundant cysteine residues of hair keratins. The matrix proteins include the high-sulfur and high-glycine-tyrosine keratins. This is Keratin-associated protein 6-2 from Mus musculus (Mouse).